The sequence spans 235 residues: Glycerol-3-phosphate acyltransferase (235 aa).

Helical transmembrane passes span 4–24 (LIVILAVSYLIGSIPTSIIAG), 56–76 (AVTLLDIVKGAVAAISVVVFF), 90–110 (VALRLIAGLAAVFGHVFTVFA), 126–146 (FGIAPVSTLIVLAVFLLTIFV), 152–172 (VASIIAAIAFPLVILVRKYLF), and 191–211 (IHDSLDFHLLIFGMIVAFAII).

It belongs to the PlsY family. In terms of assembly, probably interacts with PlsX.

The protein resides in the cell inner membrane. It carries out the reaction an acyl phosphate + sn-glycerol 3-phosphate = a 1-acyl-sn-glycero-3-phosphate + phosphate. It participates in lipid metabolism; phospholipid metabolism. In terms of biological role, catalyzes the transfer of an acyl group from acyl-phosphate (acyl-PO(4)) to glycerol-3-phosphate (G3P) to form lysophosphatidic acid (LPA). This enzyme utilizes acyl-phosphate as fatty acyl donor, but not acyl-CoA or acyl-ACP. The chain is Glycerol-3-phosphate acyltransferase from Prosthecochloris aestuarii (strain DSM 271 / SK 413).